Here is a 389-residue protein sequence, read N- to C-terminus: Phosphoglycerate kinase (389 aa).

Residues 21–23 (DLN), Arg36, 59–62 (HLGR), Arg112, and Arg145 each bind substrate. ATP contacts are provided by residues Lys196, Glu313, and 342–345 (GGDT).

Belongs to the phosphoglycerate kinase family. As to quaternary structure, monomer.

Its subcellular location is the cytoplasm. It catalyses the reaction (2R)-3-phosphoglycerate + ATP = (2R)-3-phospho-glyceroyl phosphate + ADP. Its pathway is carbohydrate degradation; glycolysis; pyruvate from D-glyceraldehyde 3-phosphate: step 2/5. This Histophilus somni (strain 2336) (Haemophilus somnus) protein is Phosphoglycerate kinase.